The primary structure comprises 708 residues: Leukotoxin translocation ATP-binding protein LktB (708 aa).

A Peptidase C39 domain is found at 1–126 (MEANHQRNDL…ACYQGQLILV (126 aa)). In terms of domain architecture, ABC transmembrane type-1 spans 155–437 (FLETLIVSIF…LAQLWQDFQQ (283 aa)). 5 consecutive transmembrane segments (helical) span residues 159-179 (LIVS…FQVV), 192-212 (LNII…LSGL), 270-290 (ALTS…MWYY), 296-316 (LVIL…SPIL), and 389-409 (VMVI…LSIG). The region spanning 469–704 (IAFKNIRFRY…SNGLYSYLHQ (236 aa)) is the ABC transporter domain. 503–510 (GRSGSGKS) contacts ATP.

This sequence belongs to the ABC transporter superfamily. Protein-1 exporter (TC 3.A.1.109) family. Homodimer.

The protein resides in the cell inner membrane. The catalysed reaction is ATP + H2O + proteinSide 1 = ADP + phosphate + proteinSide 2.. In terms of biological role, part of the ABC transporter complex LktBD involved in leukotoxin export. Transmembrane domains (TMD) form a pore in the inner membrane and the ATP-binding domain (NBD) is responsible for energy generation. The polypeptide is Leukotoxin translocation ATP-binding protein LktB (lktB) (Mannheimia glucosida).